A 58-amino-acid chain; its full sequence is UPF0337 protein SAV_738 (58 aa).

The interval 1 to 58 (MAADEKAQANGEQAKGKVKKVVGGAAGNESLKGKGHAEESKGDLRAAKEKAKDAIKRK) is disordered. Residues 31–58 (LKGKGHAEESKGDLRAAKEKAKDAIKRK) show a composition bias toward basic and acidic residues.

This sequence belongs to the UPF0337 (CsbD) family.

This is UPF0337 protein SAV_738 from Streptomyces avermitilis (strain ATCC 31267 / DSM 46492 / JCM 5070 / NBRC 14893 / NCIMB 12804 / NRRL 8165 / MA-4680).